A 381-amino-acid polypeptide reads, in one-letter code: Succinyl-diaminopimelate desuccinylase (381 aa).

H68 lines the Zn(2+) pocket. Residue D70 is part of the active site. Position 101 (D101) interacts with Zn(2+). Residue E135 is the Proton acceptor of the active site. Zn(2+)-binding residues include E136, E164, and H350.

Belongs to the peptidase M20A family. DapE subfamily. As to quaternary structure, homodimer. Zn(2+) is required as a cofactor. The cofactor is Co(2+).

It catalyses the reaction N-succinyl-(2S,6S)-2,6-diaminopimelate + H2O = (2S,6S)-2,6-diaminopimelate + succinate. The protein operates within amino-acid biosynthesis; L-lysine biosynthesis via DAP pathway; LL-2,6-diaminopimelate from (S)-tetrahydrodipicolinate (succinylase route): step 3/3. Functionally, catalyzes the hydrolysis of N-succinyl-L,L-diaminopimelic acid (SDAP), forming succinate and LL-2,6-diaminopimelate (DAP), an intermediate involved in the bacterial biosynthesis of lysine and meso-diaminopimelic acid, an essential component of bacterial cell walls. The polypeptide is Succinyl-diaminopimelate desuccinylase (Neisseria meningitidis serogroup C (strain 053442)).